Reading from the N-terminus, the 213-residue chain is Uridine kinase (213 aa).

15–22 provides a ligand contact to ATP; sequence GASASGKS.

It belongs to the uridine kinase family.

It localises to the cytoplasm. The enzyme catalyses uridine + ATP = UMP + ADP + H(+). It carries out the reaction cytidine + ATP = CMP + ADP + H(+). It participates in pyrimidine metabolism; CTP biosynthesis via salvage pathway; CTP from cytidine: step 1/3. Its pathway is pyrimidine metabolism; UMP biosynthesis via salvage pathway; UMP from uridine: step 1/1. This chain is Uridine kinase, found in Escherichia fergusonii (strain ATCC 35469 / DSM 13698 / CCUG 18766 / IAM 14443 / JCM 21226 / LMG 7866 / NBRC 102419 / NCTC 12128 / CDC 0568-73).